We begin with the raw amino-acid sequence, 416 residues long: CapZ-interacting protein (416 aa).

2 disordered regions span residues Met1–Pro84 and Ala98–Met416. Residues Thr8–Val20 show a composition bias toward polar residues. Ser17 is subject to Phosphoserine. Position 68 is a phosphoserine; by MAPK8; in vitro (Ser68). Ser82 carries the phosphoserine modification. The residue at position 83 (Ser83) is a Phosphoserine; by MAPK8; in vitro. Ser105 is subject to Phosphoserine. Ser108 carries the phosphoserine; by MAPK12 and MAPK13 modification. Phosphoserine is present on residues Ser116, Ser120, and Ser123. Position 124 is a phosphothreonine (Thr124). Phosphoserine occurs at positions 126, 127, 135, and 143. The segment covering Val159–Arg176 has biased composition (basic residues). Ser177 carries the post-translational modification Phosphoserine. A Phosphoserine; by MAPKAPK2 and MAPKAPK3 modification is found at Ser179. At Ser216 the chain carries Phosphoserine; by MAPK8; in vitro. The RCSD domain occupies Gly227–Glu330. Residue Ser244 is modified to Phosphoserine; by MAPKAPK2 or MAPKAPK3; in vitro. Positions Ser244 to Gly273 are enriched in basic and acidic residues. Residues Ser267, Ser268, Ser284, Ser298, and Ser333 each carry the phosphoserine modification. Over residues Ala292 to Pro349 the composition is skewed to basic and acidic residues. Thr336 carries the post-translational modification Phosphothreonine. Ser351 carries the phosphoserine modification. The segment covering Asp360–Gln372 has biased composition (basic and acidic residues). Polar residues predominate over residues Ser382–Gln397.

Interacts with CAPZA2 and CAPZB. In terms of processing, dephosphorylation results in its dissociation from CAPZA2. As to expression, highly expressed in skeletal muscle and more weakly in cardiac muscle. Also expressed in several lymphoid organs, including spleen, thymus, peripheral blood leukocytes, lymph node and bone marrow.

Functionally, stress-induced phosphorylation of CAPZIP may regulate the ability of F-actin-capping protein to remodel actin filament assembly. The sequence is that of CapZ-interacting protein (RCSD1) from Homo sapiens (Human).